Reading from the N-terminus, the 83-residue chain is Small ribosomal subunit protein bS16 (83 aa).

This sequence belongs to the bacterial ribosomal protein bS16 family.

The protein is Small ribosomal subunit protein bS16 of Ectopseudomonas mendocina (strain ymp) (Pseudomonas mendocina).